Here is a 357-residue protein sequence, read N- to C-terminus: UDP-N-acetylglucosamine--N-acetylmuramyl-(pentapeptide) pyrophosphoryl-undecaprenol N-acetylglucosamine transferase (357 aa).

Residues 15–17 (TGG), asparagine 124, arginine 165, serine 194, and glutamine 288 each bind UDP-N-acetyl-alpha-D-glucosamine.

This sequence belongs to the glycosyltransferase 28 family. MurG subfamily.

It localises to the cell inner membrane. The enzyme catalyses di-trans,octa-cis-undecaprenyl diphospho-N-acetyl-alpha-D-muramoyl-L-alanyl-D-glutamyl-meso-2,6-diaminopimeloyl-D-alanyl-D-alanine + UDP-N-acetyl-alpha-D-glucosamine = di-trans,octa-cis-undecaprenyl diphospho-[N-acetyl-alpha-D-glucosaminyl-(1-&gt;4)]-N-acetyl-alpha-D-muramoyl-L-alanyl-D-glutamyl-meso-2,6-diaminopimeloyl-D-alanyl-D-alanine + UDP + H(+). Its pathway is cell wall biogenesis; peptidoglycan biosynthesis. Its function is as follows. Cell wall formation. Catalyzes the transfer of a GlcNAc subunit on undecaprenyl-pyrophosphoryl-MurNAc-pentapeptide (lipid intermediate I) to form undecaprenyl-pyrophosphoryl-MurNAc-(pentapeptide)GlcNAc (lipid intermediate II). The chain is UDP-N-acetylglucosamine--N-acetylmuramyl-(pentapeptide) pyrophosphoryl-undecaprenol N-acetylglucosamine transferase from Nostoc sp. (strain PCC 7120 / SAG 25.82 / UTEX 2576).